A 220-amino-acid chain; its full sequence is Ribose-5-phosphate isomerase A (220 aa).

Substrate contacts are provided by residues 25–28 (TGST), 80–83 (DGAD), and 93–96 (KGGG). The Proton acceptor role is filled by E102. K120 lines the substrate pocket.

The protein belongs to the ribose 5-phosphate isomerase family. Homodimer.

The catalysed reaction is aldehydo-D-ribose 5-phosphate = D-ribulose 5-phosphate. It functions in the pathway carbohydrate degradation; pentose phosphate pathway; D-ribose 5-phosphate from D-ribulose 5-phosphate (non-oxidative stage): step 1/1. In terms of biological role, catalyzes the reversible conversion of ribose-5-phosphate to ribulose 5-phosphate. The chain is Ribose-5-phosphate isomerase A from Bacillus cereus (strain ZK / E33L).